Here is a 171-residue protein sequence, read N- to C-terminus: Mitochondrial import inner membrane translocase subunit Tim17-A (171 aa).

Cys-9 and Cys-78 are oxidised to a cystine. Transmembrane regions (helical) follow at residues Cys-17–Phe-37, Gly-63–Asp-77, and Val-113–Leu-133. Residues Gly-144–Gln-171 are disordered. A compositionally biased stretch (low complexity) spans Pro-151–Pro-163.

Belongs to the Tim17/Tim22/Tim23 family. Component of the TIM23 complex at least composed of TIMM23, TIMM17 (TIMM17A or TIMM17B) and TIMM50. The complex interacts with the TIMM44 component of the PAM complex and with DNAJC15. Post-translationally, degraded by YMEL1 downstream of the integrated stress response (ISR).

It localises to the mitochondrion inner membrane. In terms of biological role, essential component of the TIM23 complex, a complex that mediates the translocation of transit peptide-containing proteins across the mitochondrial inner membrane. The chain is Mitochondrial import inner membrane translocase subunit Tim17-A (TIMM17A) from Homo sapiens (Human).